A 362-amino-acid polypeptide reads, in one-letter code: P2Y purinoceptor 1 (362 aa).

At 1-40 (MTEALISAALNGTQPELLAGGWAAGNASTKCSLTKTGFQF) the chain is on the extracellular side. N11 and N26 each carry an N-linked (GlcNAc...) asparagine glycan. Intrachain disulfides connect C31–C285 and C113–C191. Residue K35 participates in ADP binding. A helical membrane pass occupies residues 41-63 (YYLPTVYILVFITGFLGNSVAIW). Residues 64–76 (MFVFHMRPWSGIS) lie on the Cytoplasmic side of the membrane. Residues 77–98 (VYMFNLALADFLYVLTLPALIF) traverse the membrane as a helical segment. The Extracellular portion of the chain corresponds to 99-114 (YYFNKTDWIFGDVMCK). N-linked (GlcNAc...) asparagine glycosylation occurs at N102. A helical membrane pass occupies residues 115 to 136 (LQRFIFHVNLYGSILFLTCISV). At 137–155 (HRYTGVVHPLKSLGRLKKK) the chain is on the cytoplasmic side. The helical transmembrane segment at 156–177 (NAVYVSSLVWALVVAVIAPILF) threads the bilayer. Residues 178-203 (YSGTGVRRNKTITCYDTTADEYLRSY) lie on the Extracellular side of the membrane. N-linked (GlcNAc...) asparagine glycosylation is present at N186. 192 to 194 (YDT) contacts ADP. The helical transmembrane segment at 204–226 (FVYSMCTTVFMFCIPFIVILGCY) threads the bilayer. Residues 227–249 (GLIVKALIYKDLDNSPLRRKSIY) lie on the Cytoplasmic side of the membrane. Residues 250–273 (LVIIVLTVFAVSYLPFHVMKTLNL) traverse the membrane as a helical segment. Residues 272–276 (NLRAR), 292–295 (YATY), and R299 contribute to the ADP site. Topologically, residues 274–292 (RARLDFQTPQMCAFNDKVY) are extracellular. The helical transmembrane segment at 293–314 (ATYQVTRGLASLNSCVDPILYF) threads the bilayer. Residues 315-362 (LAGDTFRRRLSRATRKSSRRSEPNVQSKSEEMTLNILTEYKQNGDTSL) lie on the Cytoplasmic side of the membrane.

The protein belongs to the G-protein coupled receptor 1 family. As to expression, mainly found in blood, brain, and lung. To a lesser extent in stomach, gut and skeletal muscle.

It localises to the cell membrane. Its function is as follows. Receptor for extracellular adenine nucleotides such as ADP. In platelets, binding to ADP leads to mobilization of intracellular calcium ions via activation of phospholipase C, a change in platelet shape, and ultimately platelet aggregation. The protein is P2Y purinoceptor 1 (P2RY1) of Meleagris gallopavo (Wild turkey).